The primary structure comprises 448 residues: Trigger factor (448 aa).

The 86-residue stretch at 172-257 (GDRVTVDFVG…MKKIEWPHLP (86 aa)) folds into the PPIase FKBP-type domain.

It belongs to the FKBP-type PPIase family. Tig subfamily.

The protein resides in the cytoplasm. It carries out the reaction [protein]-peptidylproline (omega=180) = [protein]-peptidylproline (omega=0). Involved in protein export. Acts as a chaperone by maintaining the newly synthesized protein in an open conformation. Functions as a peptidyl-prolyl cis-trans isomerase. The chain is Trigger factor from Burkholderia ambifaria (strain ATCC BAA-244 / DSM 16087 / CCUG 44356 / LMG 19182 / AMMD) (Burkholderia cepacia (strain AMMD)).